The primary structure comprises 258 residues: Peptidase inhibitor 15 (258 aa).

Positions 1-19 are cleaved as a signal peptide; sequence MIAISAVSSALLFSLLCEA. A propeptide spanning residues 20–60 is cleaved from the precursor; the sequence is STVVLLNSTDSSPPTNNFTDIEAALKAQLDSADIPKARRKR. 3 N-linked (GlcNAc...) asparagine glycosylation sites follow: N26, N36, and N124. In terms of domain architecture, SCP spans 71-211; sequence LDYHNQVRGK…RRAVYLVCNY (141 aa).

This sequence belongs to the CRISP family. Post-translationally, N-glycosylated. In terms of tissue distribution, weakly expressed. Expressed at low level in prostate, mammary gland, salivary gland and thyroid gland.

The protein resides in the secreted. In terms of biological role, serine protease inhibitor which displays weak inhibitory activity against trypsin. May play a role in facial patterning during embryonic development. The polypeptide is Peptidase inhibitor 15 (PI15) (Homo sapiens (Human)).